A 693-amino-acid polypeptide reads, in one-letter code: Polyribonucleotide nucleotidyltransferase (693 aa).

Mg(2+)-binding residues include D485 and D491. Residues 552 to 611 (PRIETMQINTSKIATVIGPGGKQIRQIIERSGAQVDINDNGLINISANTQESIDKAKELI) enclose the KH domain. The S1 motif domain maps to 621–689 (GKIYNGRVTS…EKGQLKLSHK (69 aa)).

It belongs to the polyribonucleotide nucleotidyltransferase family. Mg(2+) serves as cofactor.

The protein resides in the cytoplasm. The catalysed reaction is RNA(n+1) + phosphate = RNA(n) + a ribonucleoside 5'-diphosphate. In terms of biological role, involved in mRNA degradation. Catalyzes the phosphorolysis of single-stranded polyribonucleotides processively in the 3'- to 5'-direction. The sequence is that of Polyribonucleotide nucleotidyltransferase from Chlamydia muridarum (strain MoPn / Nigg).